Reading from the N-terminus, the 187-residue chain is Probable nicotinate-nucleotide adenylyltransferase (187 aa).

It belongs to the NadD family.

It carries out the reaction nicotinate beta-D-ribonucleotide + ATP + H(+) = deamido-NAD(+) + diphosphate. The protein operates within cofactor biosynthesis; NAD(+) biosynthesis; deamido-NAD(+) from nicotinate D-ribonucleotide: step 1/1. In terms of biological role, catalyzes the reversible adenylation of nicotinate mononucleotide (NaMN) to nicotinic acid adenine dinucleotide (NaAD). The chain is Probable nicotinate-nucleotide adenylyltransferase from Anaeromyxobacter sp. (strain K).